The following is an 876-amino-acid chain: Leucine--tRNA ligase (876 aa).

The 'HIGH' region signature appears at 42 to 52 (PYPSGKLHMGH). The short motif at 634–638 (KMSKS) is the 'KMSKS' region element. K637 is a binding site for ATP.

It belongs to the class-I aminoacyl-tRNA synthetase family.

The protein resides in the cytoplasm. It catalyses the reaction tRNA(Leu) + L-leucine + ATP = L-leucyl-tRNA(Leu) + AMP + diphosphate. In Neisseria gonorrhoeae (strain NCCP11945), this protein is Leucine--tRNA ligase.